A 742-amino-acid polypeptide reads, in one-letter code: TBC1 domain family member 25 (742 aa).

Residues 1–22 are disordered; it reads MRPPAQARWEGQGPTAPLRLRS. A Phosphoserine modification is found at Ser194. At Thr214 the chain carries Phosphothreonine. The 207-residue stretch at 282–488 folds into the Rab-GAP TBC domain; that stretch reads GVEPSLRKVV…RMLEVTWSSL (207 aa). The residue at position 560 (Ser560) is a Phosphoserine. The tract at residues 592–664 is disordered; sequence SLSEPLLNSP…PPMGLPPPQE (73 aa). Positions 600–628 are enriched in low complexity; that stretch reads SPDPLLSTSSRPDSPSSSSPPSTQEASPS. The segment covering 649-663 has biased composition (pro residues); the sequence is KPVPPPPPMGLPPPQ.

As to quaternary structure, interacts (via N-terminus) with MAP1LC3B, GABARAP and GABARAPL2.

The protein resides in the cytoplasm. Its subcellular location is the cytoplasmic vesicle. It is found in the autophagosome. Functionally, acts as a GTPase-activating protein specific for RAB33B. Involved in the regulation of autophagosome maturation, the process in which autophagosomes fuse with endosomes and lysosomes. The chain is TBC1 domain family member 25 (Tbc1d25) from Mus musculus (Mouse).